A 381-amino-acid polypeptide reads, in one-letter code: UDP-N-acetylglucosamine--N-acetylmuramyl-(pentapeptide) pyrophosphoryl-undecaprenol N-acetylglucosamine transferase (381 aa).

Residues threonine 10–glycine 12, asparagine 124, arginine 165, serine 207, isoleucine 263, and glutamine 308 contribute to the UDP-N-acetyl-alpha-D-glucosamine site.

The protein belongs to the glycosyltransferase 28 family. MurG subfamily.

Its subcellular location is the cell inner membrane. The catalysed reaction is di-trans,octa-cis-undecaprenyl diphospho-N-acetyl-alpha-D-muramoyl-L-alanyl-D-glutamyl-meso-2,6-diaminopimeloyl-D-alanyl-D-alanine + UDP-N-acetyl-alpha-D-glucosamine = di-trans,octa-cis-undecaprenyl diphospho-[N-acetyl-alpha-D-glucosaminyl-(1-&gt;4)]-N-acetyl-alpha-D-muramoyl-L-alanyl-D-glutamyl-meso-2,6-diaminopimeloyl-D-alanyl-D-alanine + UDP + H(+). It functions in the pathway cell wall biogenesis; peptidoglycan biosynthesis. In terms of biological role, cell wall formation. Catalyzes the transfer of a GlcNAc subunit on undecaprenyl-pyrophosphoryl-MurNAc-pentapeptide (lipid intermediate I) to form undecaprenyl-pyrophosphoryl-MurNAc-(pentapeptide)GlcNAc (lipid intermediate II). This Trichlorobacter lovleyi (strain ATCC BAA-1151 / DSM 17278 / SZ) (Geobacter lovleyi) protein is UDP-N-acetylglucosamine--N-acetylmuramyl-(pentapeptide) pyrophosphoryl-undecaprenol N-acetylglucosamine transferase.